The chain runs to 192 residues: Pyridoxal 5'-phosphate synthase subunit PdxT (192 aa).

Residue 46–48 (GES) coordinates L-glutamine. Cys75 serves as the catalytic Nucleophile. L-glutamine is bound by residues Arg101 and 129–130 (IR). Catalysis depends on charge relay system residues His166 and Glu168.

It belongs to the glutaminase PdxT/SNO family. In terms of assembly, in the presence of PdxS, forms a dodecamer of heterodimers. Only shows activity in the heterodimer.

It carries out the reaction aldehydo-D-ribose 5-phosphate + D-glyceraldehyde 3-phosphate + L-glutamine = pyridoxal 5'-phosphate + L-glutamate + phosphate + 3 H2O + H(+). The catalysed reaction is L-glutamine + H2O = L-glutamate + NH4(+). The protein operates within cofactor biosynthesis; pyridoxal 5'-phosphate biosynthesis. Its function is as follows. Catalyzes the hydrolysis of glutamine to glutamate and ammonia as part of the biosynthesis of pyridoxal 5'-phosphate. The resulting ammonia molecule is channeled to the active site of PdxS. This Staphylococcus carnosus (strain TM300) protein is Pyridoxal 5'-phosphate synthase subunit PdxT.